Here is a 240-residue protein sequence, read N- to C-terminus: Venom hemolysin-like protein 1 (240 aa).

Residues 1-18 (MQYKLILLVVGLFQASLA) form the signal peptide. Positions 25 to 50 (ESVPHPSKDVAPPDTQDSSTQTEVTT) are disordered. A compositionally biased stretch (polar residues) spans 39–50 (TQDSSTQTEVTT).

As to expression, expressed by the venom gland (anterior main gland) (at protein level).

Its subcellular location is the secreted. This is Venom hemolysin-like protein 1 from Platymeris rhadamanthus (Red spot assassin bug).